A 362-amino-acid chain; its full sequence is GTPase Obg (362 aa).

Positions 1-159 constitute an Obg domain; the sequence is MKFLDEAKVY…KTIWLRLKLI (159 aa). The region spanning 160-327 is the OBG-type G domain; that stretch reads ADAGLVGLPN…VLRALRDVIV (168 aa). Residues 166-173, 191-195, 212-215, 279-282, and 308-310 each bind GTP; these read GLPNAGKS, FTTLH, DIPG, SQID, and SAV. Mg(2+)-binding residues include Ser-173 and Thr-193. Residues 332-362 form a disordered region; sequence EEKPAKVPKLRHRDMIVSDEGEGEDGADDQP. The span at 348-362 shows a compositional bias: acidic residues; it reads VSDEGEGEDGADDQP.

This sequence belongs to the TRAFAC class OBG-HflX-like GTPase superfamily. OBG GTPase family. As to quaternary structure, monomer. Requires Mg(2+) as cofactor.

The protein localises to the cytoplasm. Functionally, an essential GTPase which binds GTP, GDP and possibly (p)ppGpp with moderate affinity, with high nucleotide exchange rates and a fairly low GTP hydrolysis rate. Plays a role in control of the cell cycle, stress response, ribosome biogenesis and in those bacteria that undergo differentiation, in morphogenesis control. The polypeptide is GTPase Obg (Rhizobium etli (strain CIAT 652)).